We begin with the raw amino-acid sequence, 256 residues long: Triosephosphate isomerase (256 aa).

Position 10–12 (10–12 (NWK)) interacts with substrate. Histidine 96 acts as the Electrophile in catalysis. Glutamate 168 serves as the catalytic Proton acceptor. The substrate site is built by glycine 174 and serine 213.

The protein belongs to the triosephosphate isomerase family. As to quaternary structure, homodimer.

It localises to the cytoplasm. The enzyme catalyses D-glyceraldehyde 3-phosphate = dihydroxyacetone phosphate. It participates in carbohydrate biosynthesis; gluconeogenesis. Its pathway is carbohydrate degradation; glycolysis; D-glyceraldehyde 3-phosphate from glycerone phosphate: step 1/1. Functionally, involved in the gluconeogenesis. Catalyzes stereospecifically the conversion of dihydroxyacetone phosphate (DHAP) to D-glyceraldehyde-3-phosphate (G3P). This is Triosephosphate isomerase from Wigglesworthia glossinidia brevipalpis.